The following is a 463-amino-acid chain: Tryprostatin B synthase (463 aa).

Residues Met-93 and Glu-101 each contribute to the brevianamide F site. Arg-112, Lys-200, and Tyr-202 together coordinate dimethylallyl diphosphate. Tyr-204 lines the brevianamide F pocket. Dimethylallyl diphosphate-binding residues include Lys-293, Tyr-295, Gln-379, Tyr-381, Tyr-445, and Tyr-449.

The protein belongs to the tryptophan dimethylallyltransferase family.

The enzyme catalyses brevianamide F + dimethylallyl diphosphate = tryprostatin B + diphosphate. Its pathway is mycotoxin biosynthesis. Functionally, brevianamide F prenyltransferase; part of the gene cluster that mediates the biosynthesis of fumitremorgins, indole alkaloids that carry not only intriguing chemical structures, but also interesting biological and pharmacological activities. The biosynthesis of fumitremorgin-type alkaloids begins by condensation of the two amino acids L-tryptophan and L-proline to brevianamide F, catalyzed by the non-ribosomal peptide synthetase ftmPS/ftmA. Brevianamide F is then prenylated by the prenyltransferase ftmPT1/ftmB in the presence of dimethylallyl diphosphate, resulting in the formation of tryprostatin B. The three cytochrome P450 monooxygenases, ftmP450-1/ftmC, ftmP450-2/ftmE and ftmP450-3/FtmG, are responsible for the conversion of tryprostatin B to 6-hydroxytryprostatin B, tryprostatin A to fumitremorgin C and fumitremorgin C to 12,13-dihydroxyfumitremorgin C, respectively. The putative methyltransferase ftmMT/ftmD is expected for the conversion of 6-hydroxytryprostatin B to tryprostatin A. FtmPT2/FtmH catalyzes the prenylation of 12,13-dihydroxyfumitre-morgin C in the presence of dimethylallyl diphosphate, resulting in the formation of fumitremorgin B. Fumitremorgin B is further converted to verruculogen by ftmOx1/ftmF via the insertion of an endoperoxide bond between the two prenyl moieties. Finally, verruculogen is further converted to fumitremorgin A by the verruculogen prenyltransferase ftmPT3. The sequence is that of Tryprostatin B synthase from Neosartorya fischeri (strain ATCC 1020 / DSM 3700 / CBS 544.65 / FGSC A1164 / JCM 1740 / NRRL 181 / WB 181) (Aspergillus fischerianus).